Reading from the N-terminus, the 423-residue chain is Mannose-6-phosphate isomerase (423 aa).

Residue alanine 2 is modified to N-acetylalanine. Serine 102 and serine 108 each carry phosphoserine. Positions 110, 112, 137, and 276 each coordinate Zn(2+). The active site involves arginine 295.

It belongs to the mannose-6-phosphate isomerase type 1 family. Requires Zn(2+) as cofactor. As to expression, expressed in all tissues, but more abundant in heart, brain and skeletal muscle.

Its subcellular location is the cytoplasm. The catalysed reaction is D-mannose 6-phosphate = D-fructose 6-phosphate. It participates in nucleotide-sugar biosynthesis; GDP-alpha-D-mannose biosynthesis; alpha-D-mannose 1-phosphate from D-fructose 6-phosphate: step 1/2. Its function is as follows. Isomerase that catalyzes the interconversion of fructose-6-P and mannose-6-P and has a critical role in the supply of D-mannose derivatives required for many eukaryotic glycosylation reactions. The sequence is that of Mannose-6-phosphate isomerase from Homo sapiens (Human).